The following is a 282-amino-acid chain: Bifunctional protein FolD (282 aa).

NADP(+) contacts are provided by residues 165 to 167 and Ile-231; that span reads GAS.

Belongs to the tetrahydrofolate dehydrogenase/cyclohydrolase family. In terms of assembly, homodimer.

It catalyses the reaction (6R)-5,10-methylene-5,6,7,8-tetrahydrofolate + NADP(+) = (6R)-5,10-methenyltetrahydrofolate + NADPH. The catalysed reaction is (6R)-5,10-methenyltetrahydrofolate + H2O = (6R)-10-formyltetrahydrofolate + H(+). Its pathway is one-carbon metabolism; tetrahydrofolate interconversion. Functionally, catalyzes the oxidation of 5,10-methylenetetrahydrofolate to 5,10-methenyltetrahydrofolate and then the hydrolysis of 5,10-methenyltetrahydrofolate to 10-formyltetrahydrofolate. The sequence is that of Bifunctional protein FolD from Francisella tularensis subsp. novicida (strain U112).